A 235-amino-acid polypeptide reads, in one-letter code: Protein FEV (235 aa).

The segment at residues Ile-58–Asp-138 is a DNA-binding region (ETS).

This sequence belongs to the ETS family. Expressed by serotonergic neurons in anterior and posterior raphe.

It localises to the nucleus. Functions as a transcriptional regulator. Functions in the differentiation and the maintenance of the central serotonergic neurons. May play a role in cell growth. The protein is Protein FEV (fev) of Danio rerio (Zebrafish).